The following is a 586-amino-acid chain: Phosphomethylpyrimidine synthase (586 aa).

Residues 1–58 (MKQSVSAEQIELKSSLPGSKKVYVDGPREGMKVPMREIEQSDTNGVPNPPIRVYDTSG) are disordered. A compositionally biased stretch (basic and acidic residues) spans 22-39 (VYVDGPREGMKVPMREIE). Residues N193, M222, Y251, H287, 307-309 (SRG), 348-351 (DGLR), and E387 each bind substrate. H391 is a binding site for Zn(2+). Y414 is a substrate binding site. Position 455 (H455) interacts with Zn(2+). [4Fe-4S] cluster-binding residues include C535, C538, and C543.

The protein belongs to the ThiC family. [4Fe-4S] cluster serves as cofactor.

It catalyses the reaction 5-amino-1-(5-phospho-beta-D-ribosyl)imidazole + S-adenosyl-L-methionine = 4-amino-2-methyl-5-(phosphooxymethyl)pyrimidine + CO + 5'-deoxyadenosine + formate + L-methionine + 3 H(+). It functions in the pathway cofactor biosynthesis; thiamine diphosphate biosynthesis. In terms of biological role, catalyzes the synthesis of the hydroxymethylpyrimidine phosphate (HMP-P) moiety of thiamine from aminoimidazole ribotide (AIR) in a radical S-adenosyl-L-methionine (SAM)-dependent reaction. In Bacillus thuringiensis (strain Al Hakam), this protein is Phosphomethylpyrimidine synthase.